Reading from the N-terminus, the 43-residue chain is Photosystem II reaction center protein Y (43 aa).

The chain crosses the membrane as a helical span at residues 8–26 (LFLVVAPILAAVSWAAFNI).

This sequence belongs to the PsbY family. As to quaternary structure, PSII is composed of 1 copy each of membrane proteins PsbA, PsbB, PsbC, PsbD, PsbE, PsbF, PsbH, PsbI, PsbJ, PsbK, PsbL, PsbM, PsbT, PsbX, PsbY, PsbZ, Psb30/Ycf12, peripheral proteins PsbO, CyanoQ (PsbQ), PsbU, PsbV and a large number of cofactors. It forms dimeric complexes.

The protein resides in the cellular thylakoid membrane. In terms of biological role, loosely associated component of the core of photosystem II (PSII), it is not always seen in crystals. PSII is a light-driven water plastoquinone oxidoreductase, using light energy to abstract electrons from H(2)O, generating a proton gradient subsequently used for ATP formation. The protein is Photosystem II reaction center protein Y of Parasynechococcus marenigrum (strain WH8102).